A 1235-amino-acid chain; its full sequence is Serine/threonine-protein kinase TAO2 (1235 aa).

At serine 9 the chain carries Phosphoserine. Residues 28–281 (FSDLREIGHG…SEVLLKHRFV (254 aa)) enclose the Protein kinase domain. ATP-binding positions include 34-42 (IGHGSFGAV) and lysine 57. 106-108 (EYC) contacts staurosporine. Residue aspartate 151 is the Proton acceptor of the active site. Residue glycine 155 coordinates staurosporine. Serine 181 carries the phosphoserine modification. The segment at 318–457 (QEAPNGPGAE…PTSTSSSSAR (140 aa)) is disordered. Over residues 350–374 (SSHSVPSMSISASSQSSSVNSLADA) the composition is skewed to low complexity. Positions 375 to 395 (SDNEEEEEEEEEEEEEEEEEG) are enriched in acidic residues. Over residues 396–411 (PESREMAMMQEGEHTV) the composition is skewed to basic and acidic residues. At serine 416 the chain carries Phosphoserine. Coiled-coil stretches lie at residues 488 to 523 (SALREQLSGYKRMRRQHQKQLLALESRLRGEREEHS) and 576 to 603 (KELAALLEAQKRTYKLRKEQLKEELQEN). A Phosphoserine modification is found at serine 658. Positions 683–715 (LRQHEATRELELRQLQAVQRTRAELTRLQHQTE) form a coiled coil. Serine 777, serine 825, and serine 827 each carry phosphoserine. Positions 892-941 (GPVLTPVPEEEEEEEEEGGAPIGTPRDPGDGCPSPDIPPEPPPSHLRQYP) are disordered. Over residues 899–909 (PEEEEEEEEEG) the composition is skewed to acidic residues. Residues 926–935 (PDIPPEPPPS) show a composition bias toward pro residues. Transmembrane regions (helical) follow at residues 967-987 (LLPLLLLLLLPLLAAQGGGGL), 989-1009 (AALLALEVGLVGLGASYLFLC), and 1014-1034 (LPPSLFLLLAQGTALGAVLSL). Arginine 1038 carries the phosphoserine modification. 2 helical membrane-spanning segments follow: residues 1040 to 1060 (LMGVPLGLGAAWLLAWPSLAL) and 1170 to 1190 (LASCLPPWAVHILASWGLLKG). The segment at 1210-1235 (SASRQLPPGTVAGRRSQTRRALPPWR) is disordered.

This sequence belongs to the protein kinase superfamily. STE Ser/Thr protein kinase family. STE20 subfamily. As to quaternary structure, self-associates. Interacts with MAP2K3 and MAP2K6. Interacts with tubulins. Interacts with MAP3K7 and interferes with MAP3K7-binding to CHUK and thus prevents NF-kappa-B activation. Isoform 2 interacts with PCDH8; this complex may also include CDH2. Mg(2+) serves as cofactor. Autophosphorylated. Phosphorylated by ATM. In terms of processing, phosphorylated on Ser-1038 by MAPK14. This phosphorylation is required PCDH8 for endocytosis.

It localises to the cytoplasmic vesicle membrane. The protein resides in the cytoplasm. It is found in the cytoskeleton. Its subcellular location is the cell projection. The protein localises to the dendrite. It catalyses the reaction L-seryl-[protein] + ATP = O-phospho-L-seryl-[protein] + ADP + H(+). The catalysed reaction is L-threonyl-[protein] + ATP = O-phospho-L-threonyl-[protein] + ADP + H(+). Its activity is regulated as follows. Moderately inhibited by staurosporine, a broad-range protein kinase inhibitor. Functionally, serine/threonine-protein kinase involved in different processes such as membrane blebbing and apoptotic bodies formation DNA damage response and MAPK14/p38 MAPK stress-activated MAPK cascade. Phosphorylates itself, MBP, activated MAPK8, MAP2K3, MAP2K6 and tubulins. Activates the MAPK14/p38 MAPK signaling pathway through the specific activation and phosphorylation of the upstream MAP2K3 and MAP2K6 kinases. In response to DNA damage, involved in the G2/M transition DNA damage checkpoint by activating the p38/MAPK14 stress-activated MAPK cascade, probably by mediating phosphorylation of upstream MAP2K3 and MAP2K6 kinases. May affect microtubule organization and stability. May play a role in the osmotic stress-MAPK8 pathway. Prevents MAP3K7-mediated activation of CHUK, and thus NF-kappa-B activation. Isoform 2, but not isoform 1, is required for PCDH8 endocytosis. Following homophilic interactions between PCDH8 extracellular domains, isoform 2 phosphorylates and activates MAPK14/p38 MAPK which in turn phosphorylates isoform 2. This process leads to PCDH8 endocytosis and CDH2 cointernalization. Both isoforms are involved in MAPK14/p38 MAPK activation. In Rattus norvegicus (Rat), this protein is Serine/threonine-protein kinase TAO2 (Taok2).